The sequence spans 136 residues: Large-conductance mechanosensitive channel (136 aa).

4 consecutive transmembrane segments (helical) span residues 9 to 29 (AFAS…GAAF), 32 to 52 (IVSS…LGGV), 54 to 74 (FSDL…VVIA), and 79 to 99 (IQTV…LKAI).

Belongs to the MscL family. Homopentamer.

It localises to the cell inner membrane. Channel that opens in response to stretch forces in the membrane lipid bilayer. May participate in the regulation of osmotic pressure changes within the cell. This Vibrio cholerae serotype O1 (strain ATCC 39541 / Classical Ogawa 395 / O395) protein is Large-conductance mechanosensitive channel.